We begin with the raw amino-acid sequence, 292 residues long: Elongation factor Ts (292 aa).

An involved in Mg(2+) ion dislocation from EF-Tu region spans residues 80–83 (TDFV).

Belongs to the EF-Ts family.

The protein localises to the cytoplasm. Associates with the EF-Tu.GDP complex and induces the exchange of GDP to GTP. It remains bound to the aminoacyl-tRNA.EF-Tu.GTP complex up to the GTP hydrolysis stage on the ribosome. In Oenococcus oeni (strain ATCC BAA-331 / PSU-1), this protein is Elongation factor Ts.